Reading from the N-terminus, the 471-residue chain is Glutamate--tRNA ligase 1 (471 aa).

The 'HIGH' region motif lies at 15–25; it reads PSPTGYLHIGG. A 'KMSKS' region motif is present at residues 243–247; that stretch reads KLSKR. K246 is a binding site for ATP.

This sequence belongs to the class-I aminoacyl-tRNA synthetase family. Glutamate--tRNA ligase type 1 subfamily. As to quaternary structure, monomer.

It localises to the cytoplasm. The enzyme catalyses tRNA(Glu) + L-glutamate + ATP = L-glutamyl-tRNA(Glu) + AMP + diphosphate. In terms of biological role, catalyzes the attachment of glutamate to tRNA(Glu) in a two-step reaction: glutamate is first activated by ATP to form Glu-AMP and then transferred to the acceptor end of tRNA(Glu). This Cereibacter sphaeroides (strain ATCC 17029 / ATH 2.4.9) (Rhodobacter sphaeroides) protein is Glutamate--tRNA ligase 1.